The following is a 154-amino-acid chain: Large ribosomal subunit protein bL9 (154 aa).

Belongs to the bacterial ribosomal protein bL9 family.

In terms of biological role, binds to the 23S rRNA. The polypeptide is Large ribosomal subunit protein bL9 (Buchnera aphidicola subsp. Baizongia pistaciae (strain Bp)).